Here is a 310-residue protein sequence, read N- to C-terminus: MSEDAVKNAILIAGPTASGKSALAIRMAKATGGFIVNTDSMQVYGVLDLLTARPSRADLAEAEHFLYGHVPPSSTYSTGKWFEDVEALLGRCELQGRVPIFVGGTGLYFRALLGGLSQTPEVSAQVRDHWRGRMEAEGAKALHAVLCVRDPAIAAALQPSDSQRIVRALEVLESTGKSLLEWQKVKGRALVDDQSAQKIVLRPDRAWLGERIARRFSAMWAEGAIDEVRALLALDLDPALPAMKAIGVREVSAFLAETMSREEAIERSVIATRQYAKRQSTWFRNQLGEDWRVYASGEEVFQGGSFRDPQ.

An ATP-binding site is contributed by 14-21; the sequence is GPTASGKS. 16-21 contacts substrate; sequence TASGKS. Interaction with substrate tRNA regions lie at residues 39–42 and 163–167; these read DSMQ and QRIVR.

Belongs to the IPP transferase family. In terms of assembly, monomer. The cofactor is Mg(2+).

The enzyme catalyses adenosine(37) in tRNA + dimethylallyl diphosphate = N(6)-dimethylallyladenosine(37) in tRNA + diphosphate. Its function is as follows. Catalyzes the transfer of a dimethylallyl group onto the adenine at position 37 in tRNAs that read codons beginning with uridine, leading to the formation of N6-(dimethylallyl)adenosine (i(6)A). This Brucella abortus (strain S19) protein is tRNA dimethylallyltransferase.